A 546-amino-acid chain; its full sequence is 2-isopropylmalate synthase (546 aa).

The Pyruvate carboxyltransferase domain occupies 5-274 (ITIFDTTLRD…TADVHTEHLT (270 aa)). Asp14, His209, His211, and Asn245 together coordinate Mn(2+). Residues 415–546 (RLDQFSVHLS…QNGIMHTYGE (132 aa)) are regulatory domain.

This sequence belongs to the alpha-IPM synthase/homocitrate synthase family. LeuA type 1 subfamily. In terms of assembly, homodimer. Mn(2+) is required as a cofactor.

Its subcellular location is the cytoplasm. The catalysed reaction is 3-methyl-2-oxobutanoate + acetyl-CoA + H2O = (2S)-2-isopropylmalate + CoA + H(+). Its pathway is amino-acid biosynthesis; L-leucine biosynthesis; L-leucine from 3-methyl-2-oxobutanoate: step 1/4. Catalyzes the condensation of the acetyl group of acetyl-CoA with 3-methyl-2-oxobutanoate (2-ketoisovalerate) to form 3-carboxy-3-hydroxy-4-methylpentanoate (2-isopropylmalate). The protein is 2-isopropylmalate synthase of Salinibacter ruber (strain M8).